The sequence spans 354 residues: Vascular endothelial growth factor D (354 aa).

The first 21 residues, 1–21 (MYREWVVVNVFMMLYVQLVQG), serve as a signal peptide directing secretion. Residues 22 to 88 (SSNEHGPVKR…SRSASHRSTR (67 aa)) constitute a propeptide, or 99 (in a minor form). 3 disulfide bridges follow: Cys111-Cys153, Cys142-Cys189, and Cys146-Cys191. Asn155 and Asn185 each carry an N-linked (GlcNAc...) asparagine glycan. Residues 206 to 354 (SIQIPEEDRC…AQGPHSRKNP (149 aa)) constitute a propeptide that is removed on maturation. Residues 222-237 (CPIDMLWDSNKCKCVL) form a 1; approximate repeat. Residues 222-318 (CPIDMLWDSN…PDTCSCEDRC (97 aa)) are 4 X 16 AA repeats of C-X(10)-C-X-C-X(1,3)-C. 3 tandem repeats follow at residues 258 to 273 (CGPH…ECVC), 277 to 293 (CPKD…CFEC), and 301 to 318 (CQKH…EDRC). The N-linked (GlcNAc...) asparagine glycan is linked to Asn287.

This sequence belongs to the PDGF/VEGF growth factor family. In terms of assembly, homodimer; non-covalent and antiparallel. In terms of processing, undergoes a complex proteolytic maturation which generates a variety of processed secreted forms with increased activity toward VEGFR-3 and VEGFR-2. VEGF-D first form an antiparallel homodimer linked by disulfide bonds before secretion. The fully processed VEGF-D is composed mostly of two VEGF homology domains (VHDs) bound by non-covalent interactions. In terms of tissue distribution, highly expressed in lung, heart, small intestine and fetal lung, and at lower levels in skeletal muscle, colon, and pancreas.

Its subcellular location is the secreted. Its function is as follows. Growth factor active in angiogenesis, lymphangiogenesis and endothelial cell growth, stimulating their proliferation and migration and also has effects on the permeability of blood vessels. May function in the formation of the venous and lymphatic vascular systems during embryogenesis, and also in the maintenance of differentiated lymphatic endothelium in adults. Binds and activates VEGFR-2 (KDR/FLK1) and VEGFR-3 (FLT4) receptors. The protein is Vascular endothelial growth factor D of Homo sapiens (Human).